Here is a 253-residue protein sequence, read N- to C-terminus: Ubiquinone/menaquinone biosynthesis C-methyltransferase UbiE (253 aa).

S-adenosyl-L-methionine is bound by residues Thr-76, Asp-97, and 125–126 (NA).

Belongs to the class I-like SAM-binding methyltransferase superfamily. MenG/UbiE family.

The catalysed reaction is a 2-demethylmenaquinol + S-adenosyl-L-methionine = a menaquinol + S-adenosyl-L-homocysteine + H(+). The enzyme catalyses a 2-methoxy-6-(all-trans-polyprenyl)benzene-1,4-diol + S-adenosyl-L-methionine = a 5-methoxy-2-methyl-3-(all-trans-polyprenyl)benzene-1,4-diol + S-adenosyl-L-homocysteine + H(+). Its pathway is quinol/quinone metabolism; menaquinone biosynthesis; menaquinol from 1,4-dihydroxy-2-naphthoate: step 2/2. It functions in the pathway cofactor biosynthesis; ubiquinone biosynthesis. Its function is as follows. Methyltransferase required for the conversion of demethylmenaquinol (DMKH2) to menaquinol (MKH2) and the conversion of 2-polyprenyl-6-methoxy-1,4-benzoquinol (DDMQH2) to 2-polyprenyl-3-methyl-6-methoxy-1,4-benzoquinol (DMQH2). In Rhodopseudomonas palustris (strain BisB5), this protein is Ubiquinone/menaquinone biosynthesis C-methyltransferase UbiE.